A 319-amino-acid polypeptide reads, in one-letter code: Acetyl-coenzyme A carboxylase carboxyl transferase subunit alpha (319 aa).

Positions 35–296 (NIDEEVHRLR…KAQLLTDLAD (262 aa)) constitute a CoA carboxyltransferase C-terminal domain.

The protein belongs to the AccA family. Acetyl-CoA carboxylase is a heterohexamer composed of biotin carboxyl carrier protein (AccB), biotin carboxylase (AccC) and two subunits each of ACCase subunit alpha (AccA) and ACCase subunit beta (AccD).

It is found in the cytoplasm. The enzyme catalyses N(6)-carboxybiotinyl-L-lysyl-[protein] + acetyl-CoA = N(6)-biotinyl-L-lysyl-[protein] + malonyl-CoA. It functions in the pathway lipid metabolism; malonyl-CoA biosynthesis; malonyl-CoA from acetyl-CoA: step 1/1. In terms of biological role, component of the acetyl coenzyme A carboxylase (ACC) complex. First, biotin carboxylase catalyzes the carboxylation of biotin on its carrier protein (BCCP) and then the CO(2) group is transferred by the carboxyltransferase to acetyl-CoA to form malonyl-CoA. In Escherichia coli O45:K1 (strain S88 / ExPEC), this protein is Acetyl-coenzyme A carboxylase carboxyl transferase subunit alpha.